A 552-amino-acid chain; its full sequence is DNA ligase (552 aa).

Glu229 contacts ATP. Residue Lys231 is the N6-AMP-lysine intermediate of the active site. Positions 236 and 283 each coordinate ATP. Residues Glu283 and Glu377 each coordinate Mg(2+). Lys382 and Lys397 together coordinate ATP.

This sequence belongs to the ATP-dependent DNA ligase family. As to quaternary structure, interacts with host TOP2A and TOP2B. Mg(2+) is required as a cofactor.

The protein resides in the host cytoplasm. The catalysed reaction is ATP + (deoxyribonucleotide)n-3'-hydroxyl + 5'-phospho-(deoxyribonucleotide)m = (deoxyribonucleotide)n+m + AMP + diphosphate.. In terms of biological role, DNA ligase that seals nicks in double-stranded DNA during DNA replication, DNA recombination and DNA repair. Recruits cellular topoisomerase II to sites of viral replication and assembly. In Vaccinia virus (strain Copenhagen) (VACV), this protein is DNA ligase (OPG180).